Reading from the N-terminus, the 595-residue chain is E3 ubiquitin-protein ligase synoviolin B (595 aa).

A helical transmembrane segment spans residues 1-19; sequence MTGASLALTASVVAHAYYL. Residues 20-35 lie on the Lumenal side of the membrane; sequence KNQFYPTVVYLTKSSP. Residues 36-56 traverse the membrane as a helical segment; sequence SMAILYIQAFVLVFLLGKFMG. The Cytoplasmic portion of the chain corresponds to 57–92; sequence KVFFGQLRAAEMEHLLERSWYAVTETCLAFTVFRDD. A helical membrane pass occupies residues 93-113; sequence FSPRFVALFTLLLFLKCFHWL. The Lumenal portion of the chain corresponds to 114–129; that stretch reads AEDRVDFMERSPNISW. A helical transmembrane segment spans residues 130–150; that stretch reads LFHFRILALMLLLGVLDAFFV. Topologically, residues 151 to 163 are cytoplasmic; sequence SHAYNSLVTRGAS. A helical membrane pass occupies residues 164–184; it reads VQLVFGFEYAILMTMILAVFI. Residues 185 to 218 are Lumenal-facing; sequence KYILHSVDLQSENPWDNKAVYMLYTELFTGFIKV. The chain crosses the membrane as a helical span at residues 219–239; the sequence is LLYMAFMTIMVKVHTFPLFAI. Positions 230–264 are interaction with p53/TP53; the sequence is KVHTFPLFAIRPMYLAMRQFKKAVTDAVMSRRAIR. Residues 240–595 are Cytoplasmic-facing; that stretch reads RPMYLAMRQF…LQKLETTDSQ (356 aa). C285, C288, C301, H303, H306, C309, C320, and C323 together coordinate Zn(2+). An RING-type; atypical zinc finger spans residues 285–324; that stretch reads CIICREEMVSGAKRLPCNHIFHTSCLRSWFQRQQTCPTCR. The span at 335–353 shows a compositional bias: low complexity; that stretch reads QPQTPAEQQNQHQAQQQPT. Disordered stretches follow at residues 335 to 370 and 386 to 426; these read QPQTPAEQQNQHQAQQQPTPVVPPQPNFPPGMLPPF and PVPG…PGAA. The span at 354–370 shows a compositional bias: pro residues; that stretch reads PVVPPQPNFPPGMLPPF. Low complexity predominate over residues 390-408; the sequence is APVGNPPDEANPGSSSGSS. Residues 463-494 are a coiled coil; that stretch reads EELRAMEGHERQNLEARLQCLQNIHTLLDAAM. Residues 509 to 595 form a disordered region; that stretch reads PPQPPVSSSS…LQKLETTDSQ (87 aa). Residues 514–552 are compositionally biased toward low complexity; it reads VSSSSSSSASASTEPTTSSVSEPVIDTSSIVTTDSSQQS.

Belongs to the HRD1 family. Homodimer.

It is found in the endoplasmic reticulum membrane. It carries out the reaction S-ubiquitinyl-[E2 ubiquitin-conjugating enzyme]-L-cysteine + [acceptor protein]-L-lysine = [E2 ubiquitin-conjugating enzyme]-L-cysteine + N(6)-ubiquitinyl-[acceptor protein]-L-lysine.. It participates in protein modification; protein ubiquitination. In terms of biological role, E3 ubiquitin-protein ligase which accepts ubiquitin specifically from endoplasmic reticulum-associated UBC7 E2 ligase and transfers it to substrates, promoting their degradation. Component of the endoplasmic reticulum quality control (ERQC) system also called ER-associated degradation (ERAD) involved in ubiquitin-dependent degradation of misfolded endoplasmic reticulum proteins. Also promotes the degradation of normal but naturally short-lived proteins. Protects cells from ER stress-induced apoptosis. Sequesters p53 in the cytoplasm and promotes its degradation, thereby negatively regulating its biological function in transcription, cell cycle regulation and apoptosis. In Xenopus laevis (African clawed frog), this protein is E3 ubiquitin-protein ligase synoviolin B (syvn1-b).